The primary structure comprises 89 residues: Acylphosphatase (89 aa).

Residues 3–89 (CKRWILYGRV…GNYGSFHIEY (87 aa)) enclose the Acylphosphatase-like domain. Active-site residues include Arg-18 and Asn-36.

The protein belongs to the acylphosphatase family.

It catalyses the reaction an acyl phosphate + H2O = a carboxylate + phosphate + H(+). This Petrotoga mobilis (strain DSM 10674 / SJ95) protein is Acylphosphatase (acyP).